The following is a 54-amino-acid chain: Conotoxin mr5.4b (54 aa).

An N-terminal signal peptide occupies residues 1–14 (ILLLLIASAPSVDA). Positions 15–40 (QLKTKDDVPLASFHANVKRTLQKLLN) are excised as a propeptide. Glu-52 carries the 4-carboxyglutamate modification.

The protein belongs to the conotoxin T superfamily. Post-translationally, contains 2 disulfide bonds that can be either 'C1-C3, C2-C4' or 'C1-C4, C2-C3', since these disulfide connectivities have been observed for conotoxins with cysteine framework V (for examples, see AC P0DQQ7 and AC P81755). Expressed by the venom duct.

It is found in the secreted. The chain is Conotoxin mr5.4b from Conus marmoreus (Marble cone).